A 1639-amino-acid chain; its full sequence is Merozoite surface protein 1 (1639 aa).

The signal sequence occupies residues 1-19 (MKIIFFLCSFLFFIINTQC). Composition is skewed to polar residues over residues 58–67 (SGTAVTTSTP) and 107–119 (NSRR…NSSD). 2 disordered regions span residues 58–78 (SGTA…SGGS) and 94–122 (VASG…DSDA). Asn116 and Asn268 each carry an N-linked (GlcNAc...) asparagine glycan. The interval 689 to 764 (KKNIKTEGQS…VPTPPAPVNN (76 aa)) is disordered. Polar residues-rich tracts occupy residues 694–704 (TEGQSDNSEPS) and 711–722 (GQATTKPGQQAG). Low complexity predominate over residues 730–741 (VQAQAQEQKQAQ). Residues Asn764, Asn768, Asn783, and Asn844 are each glycosylated (N-linked (GlcNAc...) asparagine). The segment at 893–915 (SMQPLSLTPQDKPEVSANDDTSH) is disordered. N-linked (GlcNAc...) asparagine glycans are attached at residues Asn920, Asn964, Asn1058, Asn1165, and Asn1174. The interval 1002–1116 (QLSFDLYNKY…EESIQTEDNY (115 aa)) is required for binding to host erythrocyte cell membrane. A compositionally biased stretch (polar residues) spans 1199 to 1212 (VSESGSDTLEQSQP). The disordered stretch occupies residues 1199-1229 (VSESGSDTLEQSQPKKPASTHVGAESNTITT). Residues Asn1445 and Asn1526 are each glycosylated (N-linked (GlcNAc...) asparagine). EGF-like domains are found at residues 1530 to 1570 (HQCV…VENP) and 1571 to 1618 (NPTC…IFCS). 6 disulfide bridges follow: Cys1532-Cys1543, Cys1537-Cys1553, Cys1555-Cys1566, Cys1574-Cys1587, Cys1581-Cys1601, and Cys1603-Cys1617. Ser1618 carries the GPI-anchor amidated serine lipid modification. A propeptide spans 1619-1639 (SSNFLGISFLLILMLILYSFI) (removed in mature form).

Forms a complex composed of subunits p83, p30, p38, and p42 which remain non-covalently associated; the complex is formed at the merozoite surface prior to egress from host erythrocytes. Forms a complex composed of processed MSP1 subunits, MSP6 subunit p36 and MSP7; the complex is formed at the merozoite surface prior to egress from host erythrocytes. Within the complex, interacts (via subunit p38) with MSP6 subunit p36 and (via subunits p83, p30 and p38) with MSP7 (via subunit p22). Forms a complex composed of MSP1, MSP6, DBLMSP1 and DBLMSP2. Within the complex, interacts (via subunit p38) with DBLMSP1 and DBLMSP2. Forms a complex composed of MSP1, and rhoptry proteins RhopH3, RAP1 and CLAG9/RhopH3. Within the complex, interacts (via subunits p42 and p19) with RhopH3 (via C-terminus). Forms a complex composed of MSP1, MSP6, MSP7, MSP9 and MSP3; within the complex, MSP6 and MSP9 mediate the binding to the host erythrocyte. Interacts (via subunits p19 and p42) with MSP9; the interaction is direct; MSP1 subunits p19 or p42, and MSP9 form a co-ligand complex that interacts with host SLC4A1/Band 3 protein. May interact with PFD6. Interacts with host spectrin. As to quaternary structure, interacts with host glycophorin GYPA in a sialic acid-independent manner. In terms of assembly, interacts with host proinflammatory cytokine S100P; the interaction blocks S100P inflammatory and chemotactic activities. Interacts with host SLC4A1/Band 3 (via 5ABC region) on the host erythrocyte surface in a sialic acid-independent manner. Post-translationally, the p190 precursor is cleaved by SUB1 prior to merozoite egress into 4 subunits p83, p30, p38, and p42 which remain non-covalently associated. SUB1-mediated proteolytic cleavage occurs in an orderly manner; the first cleavage occurs at the p83/p30 site, followed by cleavage at the p30/p38 site, the last cleavage occurs at the p38/p42 site. The order of cleavage is essential for parasite viability. SUB1-mediated processing is essential for merozoite egress. In a second processing step during erythrocyte invasion, p42 is cleaved by SUB2 into p33 and p19; the latter remains attached to the merozoite surface via its GPI-anchor and stays on the surface during the subsequent ring stage.

The protein localises to the cell membrane. Its subcellular location is the secreted. The protein resides in the vacuole membrane. In terms of biological role, during the asexual blood stage, involved in merozoite egress from host erythrocytes possibly via its interaction with the host cytoskeleton protein spectrin resulting in the destabilization of the host cytoskeleton and thus leading to erythrocyte cell membrane rupture. Involved in the binding to host erythrocytes and is required for host erythrocyte invasion. Functionally, by binding to host proinflammatory cytokine S100P may interfere with host immune responses. Involved in merozoite invasion of host erythrocytes. May play a role in the biogenesis and/or function of the food vacuole during the intraerythrocytic development. This chain is Merozoite surface protein 1, found in Plasmodium falciparum (isolate Wellcome).